The following is an 859-amino-acid chain: DNA mismatch repair protein MutS (859 aa).

612–619 (GPNMGGKS) lines the ATP pocket. The interval 797 to 822 (SKPLAPSATPPSSYAAPSPAAAPAQA) is disordered.

It belongs to the DNA mismatch repair MutS family.

In terms of biological role, this protein is involved in the repair of mismatches in DNA. It is possible that it carries out the mismatch recognition step. This protein has a weak ATPase activity. The protein is DNA mismatch repair protein MutS of Alcanivorax borkumensis (strain ATCC 700651 / DSM 11573 / NCIMB 13689 / SK2).